Reading from the N-terminus, the 236-residue chain is Peroxisomal coenzyme A diphosphatase NUDT7 (236 aa).

K20 carries the N6-succinyllysine modification. Residues 37–169 form the Nudix hydrolase domain; that stretch reads SNKFSVLVPL…QKQITQSGRD (133 aa). Positions 77 to 98 match the Nudix box motif; the sequence is KRDPVDTDDTATALREAQEEVG. Mg(2+) contacts are provided by E92 and E96. N6-succinyllysine is present on K178. Positions 234-236 match the Microbody targeting signal motif; it reads SKL.

This sequence belongs to the Nudix hydrolase family. PCD1 subfamily. As to quaternary structure, monomer. The cofactor is Mn(2+). Mg(2+) serves as cofactor. In terms of tissue distribution, highly expressed in liver, brown adipose tissue and heart. Expressed at intermediate level in lung and kidney and at low level in brain. Expressed in liver, brown adipose tissue and heart at 20 times lower levels than isoform 1.

It localises to the peroxisome. It catalyses the reaction hexanoyl-CoA + H2O = hexanoyl-4'-phosphopantetheine + adenosine 3',5'-bisphosphate + 2 H(+). The enzyme catalyses octanoyl-CoA + H2O = S-octanoyl-4'-phosphopantetheine + adenosine 3',5'-bisphosphate + 2 H(+). The catalysed reaction is butanoyl-CoA + H2O = S-butanoyl-4'-phosphopantetheine + adenosine 3',5'-bisphosphate + 2 H(+). It carries out the reaction decanoyl-CoA + H2O = decanoyl-4'-phosphopantetheine + adenosine 3',5'-bisphosphate + 2 H(+). It catalyses the reaction dodecanoyl-CoA + H2O = S-dodecanoyl-4'-phosphopantetheine + adenosine 3',5'-bisphosphate + 2 H(+). The enzyme catalyses tetradecanoyl-CoA + H2O = tetradecanoyl-4'-phosphopantetheine + adenosine 3',5'-bisphosphate + 2 H(+). The catalysed reaction is choloyl-CoA + H2O = S-choloyl-4'-phosphopantetheine + adenosine 3',5'-bisphosphate + 2 H(+). It carries out the reaction 3alpha,7alpha,12alpha-trihydroxy-5beta-cholestan-26-oyl-CoA + H2O = 3alpha,7alpha,12alpha-trihydroxy-5beta-cholestan-26-oyl-4'-phosphopantetheine + adenosine 3',5'-bisphosphate + 2 H(+). It catalyses the reaction acetyl-CoA + H2O = S-acetyl-4'-phosphopantetheine + adenosine 3',5'-bisphosphate + 2 H(+). The enzyme catalyses CoA + H2O = (R)-4'-phosphopantetheine + adenosine 3',5'-bisphosphate + 2 H(+). The catalysed reaction is propanoyl-CoA + H2O = propanoyl-4'-phosphopantetheine + adenosine 3',5'-bisphosphate + 2 H(+). It carries out the reaction malonyl-CoA + H2O = malonyl-4'-phosphopantetheine + adenosine 3',5'-bisphosphate + 2 H(+). It catalyses the reaction succinyl-CoA + H2O = succinyl-4'-phosphopantetheine + adenosine 3',5'-bisphosphate + 2 H(+). The enzyme catalyses a 5'-end CoA-ribonucleoside in mRNA + H2O = a 5'-end phospho-adenosine-phospho-ribonucleoside in mRNA + (R)-4'-phosphopantetheine + 2 H(+). Its activity is regulated as follows. Inhibited by fluoride. In terms of biological role, fatty acyl-coenzyme A (CoA) diphosphatase that hydrolyzes fatty acyl-CoA to yield acyl-4'-phosphopantetheine and adenosine 3',5'-bisphosphate. Cleaves CoA, CoA esters and oxidized CoA with similar efficiencies. Preferentially hydrolyzes medium-chain acyl-CoAs and bile acid-CoAs. Has no activity toward NDP-sugars, CDP-alcohols, (deoxy)nucleoside 5'-triphosphates, nucleoside 5'-di or monophosphates, diadenosine polyphosphates, NAD, NADH, NADP, NADPH or thymidine-5'-monophospho-p-nitrophenyl ester. May be required to eliminate oxidized CoA from peroxisomes, or regulate CoA and acyl-CoA levels in this organelle in response to metabolic demand. Does not play a role in U8 snoRNA decapping activity. Binds U8 snoRNA. Exhibits decapping activity towards dpCoA-capped RNAs in vitro. This is Peroxisomal coenzyme A diphosphatase NUDT7 from Mus musculus (Mouse).